Consider the following 686-residue polypeptide: Glycine--tRNA ligase beta subunit (686 aa).

The disordered stretch occupies residues 65 to 99 (ALSEEKRGPSVERAKDENGEWSKAAQGFARGQGAT). Residues 67 to 84 (SEEKRGPSVERAKDENGE) show a composition bias toward basic and acidic residues.

The protein belongs to the class-II aminoacyl-tRNA synthetase family. Tetramer of two alpha and two beta subunits.

The protein localises to the cytoplasm. The enzyme catalyses tRNA(Gly) + glycine + ATP = glycyl-tRNA(Gly) + AMP + diphosphate. This is Glycine--tRNA ligase beta subunit from Leuconostoc citreum (strain KM20).